The sequence spans 1544 residues: Protein mahjong (1544 aa).

The disordered stretch occupies residues 1 to 110 (MSEGSGSENA…AAADRRQATK (110 aa)). The segment covering 10 to 35 (AAAAEAAAEAEAATEAALMAEAVAVA) has biased composition (low complexity). The segment covering 38–91 (SDEEEQPEAEDMPEQAGDNQEEDAAEQQDGGEPEADEDADADDAMSVENAENES) has biased composition (acidic residues). A phosphoserine mark is found at serine 565 and serine 569. The region spanning 912–944 (NKQQLYQLIFEHLESNGLSQTAQMLQREVGLPL) is the LisH domain. Disordered regions lie at residues 946–973 (TPTTRSFHQSPFDYKSLPSGSSSLSRNR) and 987–1059 (GNGD…LAED). Residue serine 955 is modified to Phosphoserine. The span at 961–971 (SLPSGSSSLSR) shows a compositional bias: low complexity. Positions 1016-1027 (PNFSSLNTTQTP) are enriched in polar residues. 2 consecutive short sequence motifs (DWD box) follow at residues 1302 to 1309 (VLWDVRSG) and 1338 to 1345 (EVWDLRTF). 2 disordered regions span residues 1447–1475 (KSERSEEEDDEEVPESDEDGSDTGSENTF) and 1487–1544 (LRNL…SSDD). 2 stretches are compositionally biased toward acidic residues: residues 1451–1467 (SEEEDDEEVPESDEDGS) and 1495–1535 (NDDE…DVLE).

It belongs to the VPRBP/DCAF1 family. In terms of assembly, component of the CUL4-RBX1-DDB1-DCAF1 E3 ubiquitin-protein ligase complex. Interacts with l(2)gl.

Its subcellular location is the nucleus. It participates in protein modification; protein ubiquitination. In terms of biological role, probable substrate recognition component of tsome E3 ubiquitin-protein ligase complex. Plays a key role in cell competition via its interaction with l(2)gl. The protein is Protein mahjong (mahj) of Drosophila melanogaster (Fruit fly).